The sequence spans 290 residues: Small ribosomal subunit protein uS2 (290 aa).

The protein belongs to the universal ribosomal protein uS2 family. In terms of assembly, component of the small ribosomal subunit. Mature ribosomes consist of a small (40S) and a large (60S) subunit. The 40S subunit contains about 33 different proteins and 1 molecule of RNA (18S). The 60S subunit contains about 49 different proteins and 3 molecules of RNA (28S, 5.8S and 5S). Interacts with ribosomal protein S21.

The protein localises to the cytoplasm. Its function is as follows. Required for the assembly and/or stability of the 40S ribosomal subunit. Required for the processing of the 20S rRNA-precursor to mature 18S rRNA in a late step of the maturation of 40S ribosomal subunits. This is Small ribosomal subunit protein uS2 from Culex quinquefasciatus (Southern house mosquito).